Reading from the N-terminus, the 905-residue chain is Tight junction protein ZO-3 (905 aa).

The 83-residue stretch at 11–93 (TATLYKDPRR…TANVTVKRPR (83 aa)) folds into the PDZ 1 domain. Positions 92–167 (PRRVQLPATK…GGGSEANGLD (76 aa)) are disordered. 2 positions are modified to phosphoserine: Ser-111 and Ser-128. Residues 124 to 133 (GDSSSGSGRS) are compositionally biased toward low complexity. Residues 139–155 (RRSRAGRRGRVGSHGRR) are compositionally biased toward basic residues. 5 positions are modified to phosphoserine: Ser-156, Ser-157, Ser-161, Ser-195, and Ser-311. One can recognise a PDZ 2 domain in the interval 187 to 264 (SVLVKRRNSE…ELTLLVLRDS (78 aa)). The interval 289 to 367 (LTSELSQAPP…QSLEDRGYSP (79 aa)) is disordered. A Phosphothreonine modification is found at Thr-317. A phosphoserine mark is found at Ser-319, Ser-343, and Ser-359. Residues 368–434 (DTRVVSFPKG…LTREEAVQFL (67 aa)) enclose the PDZ 3 domain. The region spanning 464 to 541 (GDSFYIRTHF…PNQSRAEQLA (78 aa)) is the SH3 domain. The region spanning 573–754 (RRGTKKASTQ…WYQEVKAVIQ (182 aa)) is the Guanylate kinase-like domain. Ser-584 is subject to Phosphoserine. Disordered regions lie at residues 773-818 (EDLD…PQDV) and 850-905 (TDKW…ATDL). The span at 851–877 (DKWETQADSHYTQDQRRQDSMRTYKHE) shows a compositional bias: basic and acidic residues. Ser-891 and Ser-892 each carry phosphoserine.

The protein belongs to the MAGUK family. Interacts with occludin OCLN, claudins and TPJ1. Interacts with PATJ. Interacts with UBN1. Interacts with FASLG. Interacts with CCND1. In terms of processing, phosphorylated. As to expression, is concentrated in various types of epithelium, in tissues such as the lung, liver and kidney, but not in endothelium or at cadherin-based cell-cell adhesion sites.

It localises to the cell membrane. The protein resides in the cell junction. It is found in the tight junction. The protein localises to the nucleus. In terms of biological role, tjp1, Tjp2, and Tjp3 are closely related scaffolding proteins that link tight junction (TJ) transmembrane proteins such as claudins, junctional adhesion molecules, and occludin to the actin cytoskeleton. The tight junction acts to limit movement of substances through the paracellular space and as a boundary between the compositionally distinct apical and basolateral plasma membrane domains of epithelial and endothelial cells. Binds and recruits PatJ to tight junctions where it connects and stabilizes apical and lateral components of tight junctions. Promotes cell-cycle progression through the sequestration of cyclin D1 (Ccnd1) at tight junctions during mitosis which prevents Ccnd1 degradation during M-phase and enables S-phase transition. With Tjp1 and Tjp2, participates in the junctional retention and stability of the transcription factor DbpA, but is not involved in its shuttling to the nucleus. Contrary to Tjp2, Tjp3 is dispensable for individual viability, embryonic development, epithelial differentiation, and the establishment of TJs, at least in the laboratory environment. The protein is Tight junction protein ZO-3 (Tjp3) of Mus musculus (Mouse).